A 455-amino-acid chain; its full sequence is ADP-dependent glucose/glucosamine kinase (455 aa).

The region spanning 2–455 (PTWEELYKNA…AFIGEFSFTL (454 aa)) is the ADPK domain. D-glucose-binding positions include D34, E88, 112 to 113 (GQ), and H176. E195 is a binding site for ADP. E266 contacts Mg(2+). An ADP-binding site is contributed by N292. E295 is a Mg(2+) binding site. ADP contacts are provided by residues 342–343 (HT), V429, and G439. Residue D440 participates in D-glucose binding. Mg(2+) is bound at residue D440. Catalysis depends on D440, which acts as the Proton acceptor.

This sequence belongs to the ADP-dependent glucokinase family. In terms of assembly, homodimer. The cofactor is Mg(2+).

It localises to the cytoplasm. It carries out the reaction D-glucose + ADP = D-glucose 6-phosphate + AMP + H(+). The enzyme catalyses D-glucosamine + ADP = D-glucosamine 6-phosphate + AMP + H(+). It functions in the pathway carbohydrate degradation; glycolysis. Catalyzes the ADP-dependent phosphorylation of D-glucose to D-glucose 6-phosphate and glucosamine to glucosamine 6-phosphate. Can also use CDP as the phosphoryl group donor and D-1,5-anhydroglucitol as the phosphoryl group acceptor. The sequence is that of ADP-dependent glucose/glucosamine kinase from Pyrococcus furiosus (strain ATCC 43587 / DSM 3638 / JCM 8422 / Vc1).